We begin with the raw amino-acid sequence, 462 residues long: ATP synthase subunit beta (462 aa).

Residue 151 to 158 (GGAGVGKT) participates in ATP binding.

The protein belongs to the ATPase alpha/beta chains family. F-type ATPases have 2 components, CF(1) - the catalytic core - and CF(0) - the membrane proton channel. CF(1) has five subunits: alpha(3), beta(3), gamma(1), delta(1), epsilon(1). CF(0) has four main subunits: a(1), b(1), b'(1) and c(9-12).

The protein localises to the cell inner membrane. It catalyses the reaction ATP + H2O + 4 H(+)(in) = ADP + phosphate + 5 H(+)(out). In terms of biological role, produces ATP from ADP in the presence of a proton gradient across the membrane. The catalytic sites are hosted primarily by the beta subunits. This chain is ATP synthase subunit beta, found in Pelodictyon phaeoclathratiforme (strain DSM 5477 / BU-1).